A 496-amino-acid polypeptide reads, in one-letter code: Signal recognition particle subunit SRP54 1 (496 aa).

Positions 1 to 296 (MVLAQLGGSI…DVKPFVSRLL (296 aa)) are G-domain. GTP is bound by residues 108 to 115 (GLQGSGKT), 191 to 195 (DTSGR), and 249 to 252 (TKMD). Positions 297–496 (GMGDLSGLVN…MGMFGGGGGE (200 aa)) are M-domain.

Belongs to the GTP-binding SRP family. SRP54 subfamily. In terms of assembly, component of a signal recognition particle (SRP) complex that consists of a 7SL RNA molecule of 300 nucleotides and six protein subunits: SRP72, SRP68, SRP54, SRP19, SRP14 and SRP9.

It localises to the cytoplasm. Its subcellular location is the endoplasmic reticulum. The catalysed reaction is GTP + H2O = GDP + phosphate + H(+). Component of the signal recognition particle (SRP) complex, a ribonucleoprotein complex that mediates the cotranslational targeting of secretory and membrane proteins to the endoplasmic reticulum (ER). As part of the SRP complex, associates with the SRP receptor (SR) component SRPRA to target secretory proteins to the endoplasmic reticulum membrane. Binds to the signal sequence of presecretory proteins when they emerge from the ribosomes. Displays basal GTPase activity, and stimulates reciprocal GTPase activation of the SR subunit SRPRA. Forms a guanosine 5'-triphosphate (GTP)-dependent complex with the SR subunit SRPRA. SR compaction and GTPase mediated rearrangement of SR drive SRP-mediated cotranslational protein translocation into the ER. Requires the presence of SRP9/SRP14 and/or SRP19 to stably interact with RNA. This Solanum lycopersicum (Tomato) protein is Signal recognition particle subunit SRP54 1.